A 577-amino-acid chain; its full sequence is Phosphoenolpyruvate-protein phosphotransferase (577 aa).

The active-site Tele-phosphohistidine intermediate is the His-191. Phosphoenolpyruvate is bound by residues Arg-298 and Arg-334. Residues Glu-435 and Asp-459 each coordinate Mg(2+). Residues 458-459 and Arg-469 each bind phosphoenolpyruvate; that span reads ND. Residue Cys-506 is the Proton donor of the active site.

It belongs to the PEP-utilizing enzyme family. Homodimer. The cofactor is Mg(2+).

Its subcellular location is the cytoplasm. It catalyses the reaction L-histidyl-[protein] + phosphoenolpyruvate = N(pros)-phospho-L-histidyl-[protein] + pyruvate. Its function is as follows. General (non sugar-specific) component of the phosphoenolpyruvate-dependent sugar phosphotransferase system (sugar PTS). This major carbohydrate active-transport system catalyzes the phosphorylation of incoming sugar substrates concomitantly with their translocation across the cell membrane. Enzyme I transfers the phosphoryl group from phosphoenolpyruvate (PEP) to the phosphoryl carrier protein (HPr). This Streptococcus equinus (Streptococcus bovis) protein is Phosphoenolpyruvate-protein phosphotransferase (ptsI).